A 709-amino-acid chain; its full sequence is Polyribonucleotide nucleotidyltransferase (709 aa).

Asp485 and Asp491 together coordinate Mg(2+). The KH domain occupies 552–611 (PRIYTMKIDPKKIKDVIGKGGATIRSLTEETGTSIDIDDDGTVKIAAVDSNAAKNVMGRI). Positions 621–689 (GAIYKGKVTR…RQGRIRLTMK (69 aa)) constitute an S1 motif domain.

The protein belongs to the polyribonucleotide nucleotidyltransferase family. Component of the RNA degradosome, which is a multiprotein complex involved in RNA processing and mRNA degradation. Mg(2+) serves as cofactor.

It localises to the cytoplasm. The catalysed reaction is RNA(n+1) + phosphate = RNA(n) + a ribonucleoside 5'-diphosphate. In terms of biological role, involved in mRNA degradation. Catalyzes the phosphorolysis of single-stranded polyribonucleotides processively in the 3'- to 5'-direction. The protein is Polyribonucleotide nucleotidyltransferase of Haemophilus influenzae (strain 86-028NP).